Consider the following 837-residue polypeptide: Protein translocase subunit SecA (837 aa).

ATP is bound by residues Gln-83, 101–105 (GEGKT), and Asp-494.

Belongs to the SecA family. As to quaternary structure, monomer and homodimer. Part of the essential Sec protein translocation apparatus which comprises SecA, SecYEG and auxiliary proteins SecDF. Other proteins may also be involved.

Its subcellular location is the cell membrane. The protein resides in the cytoplasm. The enzyme catalyses ATP + H2O + cellular proteinSide 1 = ADP + phosphate + cellular proteinSide 2.. Part of the Sec protein translocase complex. Interacts with the SecYEG preprotein conducting channel. Has a central role in coupling the hydrolysis of ATP to the transfer of proteins into and across the cell membrane, serving as an ATP-driven molecular motor driving the stepwise translocation of polypeptide chains across the membrane. The polypeptide is Protein translocase subunit SecA (Ureaplasma parvum serovar 3 (strain ATCC 27815 / 27 / NCTC 11736)).